We begin with the raw amino-acid sequence, 557 residues long: Ribonuclease J 2 (557 aa).

His76, His78, His144, and Glu166 together coordinate Zn(2+). 366–370 (HASSH) provides a ligand contact to substrate.

It belongs to the metallo-beta-lactamase superfamily. RNA-metabolizing metallo-beta-lactamase-like family. Bacterial RNase J subfamily. In terms of assembly, homodimer, may be a subunit of the RNA degradosome. Requires Zn(2+) as cofactor.

It localises to the cytoplasm. Its function is as follows. An RNase that has 5'-3' exonuclease and possibly endoonuclease activity. Involved in maturation of rRNA and in some organisms also mRNA maturation and/or decay. The protein is Ribonuclease J 2 of Staphylococcus saprophyticus subsp. saprophyticus (strain ATCC 15305 / DSM 20229 / NCIMB 8711 / NCTC 7292 / S-41).